Consider the following 350-residue polypeptide: MSHQTGIQASEDVKEIFARARNGKYRLLKISIENEQLVVGSCSPPSDSWEQDYDPFVLPLLEDKQPCYVLFRLDSQNAQGYEWIFIAWSPDHSHVRQKMLYAATRATLKKEFGGGHIKDEVFGTVKEDVSLHGYRKYLLSQSSPAPLTAAEEELRQIKISEVQTDVSVDTKHQTLQGVAFPISRDAFQALEKLSKRQLNYVQLEIDIKNETIILANTENTELKDLPKRIPKDSARYHFFLYKHSHEGDYLESIVFIYSMPGYTCSIRERMLYSSCKSPLLDIVERQLQMDVIRKIEIDNGDELTADFLYDEVHPKQHAHKQSFAKPKGPAGKRGIRRLIRGPAEAEATTD.

Serine 2 carries the post-translational modification N-acetylserine. The region spanning 2-139 (SHQTGIQASE…SLHGYRKYLL (138 aa)) is the ADF-H 1 domain. Residues serine 143 and serine 277 each carry the phosphoserine modification. The 139-residue stretch at 175–313 (LQGVAFPISR…TADFLYDEVH (139 aa)) folds into the ADF-H 2 domain. Phosphotyrosine is present on tyrosine 309. Positions 316–350 (QHAHKQSFAKPKGPAGKRGIRRLIRGPAEAEATTD) are disordered. Threonine 349 carries the post-translational modification Phosphothreonine.

The protein belongs to the actin-binding proteins ADF family. Twinfilin subfamily. In terms of assembly, interacts with G-actin; ADP-actin form and capping protein (CP). May also be able to interact with TWF2 and phosphoinositides, PI(4,5)P2. When bound to PI(4,5)P2, it is down-regulated. Interacts with ACTG1. In terms of processing, phosphorylated on serine and threonine residues.

It localises to the cytoplasm. The protein localises to the cytoskeleton. In terms of biological role, actin-binding protein involved in motile and morphological processes. Inhibits actin polymerization, likely by sequestering G-actin. By capping the barbed ends of filaments, it also regulates motility. Seems to play an important role in clathrin-mediated endocytosis and distribution of endocytic organelles. The polypeptide is Twinfilin-1 (Twf1) (Rattus norvegicus (Rat)).